Here is a 396-residue protein sequence, read N- to C-terminus: S-adenosylmethionine synthase (396 aa).

Histidine 16 is an ATP binding site. Aspartate 18 provides a ligand contact to Mg(2+). K(+) is bound at residue glutamate 44. Residues glutamate 57 and glutamine 100 each coordinate L-methionine. The tract at residues 100–110 (QSKDIALGVDK) is flexible loop. ATP-binding positions include 176-178 (DGK), 243-244 (RF), aspartate 252, 258-259 (RK), alanine 275, and lysine 279. Aspartate 252 contacts L-methionine. Lysine 283 contributes to the L-methionine binding site.

This sequence belongs to the AdoMet synthase family. As to quaternary structure, homotetramer; dimer of dimers. Mg(2+) serves as cofactor. It depends on K(+) as a cofactor.

Its subcellular location is the cytoplasm. It carries out the reaction L-methionine + ATP + H2O = S-adenosyl-L-methionine + phosphate + diphosphate. Its pathway is amino-acid biosynthesis; S-adenosyl-L-methionine biosynthesis; S-adenosyl-L-methionine from L-methionine: step 1/1. In terms of biological role, catalyzes the formation of S-adenosylmethionine (AdoMet) from methionine and ATP. The overall synthetic reaction is composed of two sequential steps, AdoMet formation and the subsequent tripolyphosphate hydrolysis which occurs prior to release of AdoMet from the enzyme. The protein is S-adenosylmethionine synthase of Lachnoclostridium phytofermentans (strain ATCC 700394 / DSM 18823 / ISDg) (Clostridium phytofermentans).